We begin with the raw amino-acid sequence, 275 residues long: Large ribosomal subunit protein uL2 (275 aa).

Disordered regions lie at residues 24–48 (LTTD…NAGD) and 224–264 (VMNP…NKRT). The segment covering 31–42 (KPLTKTKQRTGG) has biased composition (basic residues).

It belongs to the universal ribosomal protein uL2 family. As to quaternary structure, part of the 50S ribosomal subunit. Forms a bridge to the 30S subunit in the 70S ribosome.

In terms of biological role, one of the primary rRNA binding proteins. Required for association of the 30S and 50S subunits to form the 70S ribosome, for tRNA binding and peptide bond formation. It has been suggested to have peptidyltransferase activity; this is somewhat controversial. Makes several contacts with the 16S rRNA in the 70S ribosome. This Koribacter versatilis (strain Ellin345) protein is Large ribosomal subunit protein uL2.